The sequence spans 85 residues: UPF0181 protein YPO1774/y2534/YP_1619 (85 aa).

Positions glutamine 50 to glycine 85 are disordered. Positions phenylalanine 55 to aspartate 72 are enriched in basic and acidic residues. Residues glutamate 73–glycine 85 are compositionally biased toward acidic residues.

Belongs to the UPF0181 family.

This chain is UPF0181 protein YPO1774/y2534/YP_1619, found in Yersinia pestis.